Reading from the N-terminus, the 225-residue chain is N-(5'-phosphoribosyl)anthranilate isomerase (225 aa).

It belongs to the TrpF family.

It carries out the reaction N-(5-phospho-beta-D-ribosyl)anthranilate = 1-(2-carboxyphenylamino)-1-deoxy-D-ribulose 5-phosphate. It participates in amino-acid biosynthesis; L-tryptophan biosynthesis; L-tryptophan from chorismate: step 3/5. The sequence is that of N-(5'-phosphoribosyl)anthranilate isomerase from Nitrobacter hamburgensis (strain DSM 10229 / NCIMB 13809 / X14).